The primary structure comprises 499 residues: Nuclear receptor-binding protein 2 (499 aa).

The interval 1 to 31 is disordered; sequence MAAPEPAPRRGREREREDESEDESDILEESP. Residues 7–17 are compositionally biased toward basic and acidic residues; the sequence is APRRGRERERE. A compositionally biased stretch (acidic residues) spans 18–28; it reads DESEDESDILE. The Protein kinase domain occupies 36-304; the sequence is QKRREQVNQG…AHNLLFHRVL (269 aa). Residues 396–416 form a disordered region; sequence APPPEEAQKAKTPTPEPFDSE. A phosphothreonine mark is found at Thr407 and Thr409.

Belongs to the protein kinase superfamily. Ser/Thr protein kinase family. As to expression, expressed in Purkinje cells of the cerebellum and neurons in the CA3 region of the hippocampus. Also detected in non-neural tissues including mesenchymal layer adjacent to epithelium in developing bronchi of the lung, the epithelium of the stomach as well as cells in the liver.

The protein resides in the cytoplasm. Functionally, may regulate apoptosis of neural progenitor cells during their differentiation. The sequence is that of Nuclear receptor-binding protein 2 from Mus musculus (Mouse).